The following is a 250-amino-acid chain: MAVTKLVLVRHGESQWNKENRFTGWYDVDLSEKGVSEAKAAGKLLKEEGYSFDFAYTSVLKRAIHTLWNVLDELDQAWLPVEKSWKLNERHYGALQGLNKAETAEKYGDEQVKQWRRGFAVTPPELTKDDERYPGHDPRYAKLSEKELPLTESLALTIDRVIPYWNETILPRMKSGERVIIAAHGNSLRALVKYLDNMSEEEILELNIPTGVPLVYEFDENFKPLKRYYLGNADEIAAKAAAVANQGKAK.

Substrate contacts are provided by residues 10 to 17, 23 to 24, R62, 89 to 92, K100, 116 to 117, and 185 to 186; these read RHGESQWN, TG, ERHY, RR, and GN. H11 (tele-phosphohistidine intermediate) is an active-site residue. E89 functions as the Proton donor/acceptor in the catalytic mechanism.

Belongs to the phosphoglycerate mutase family. BPG-dependent PGAM subfamily. Homodimer.

It carries out the reaction (2R)-2-phosphoglycerate = (2R)-3-phosphoglycerate. It functions in the pathway carbohydrate degradation; glycolysis; pyruvate from D-glyceraldehyde 3-phosphate: step 3/5. Catalyzes the interconversion of 2-phosphoglycerate and 3-phosphoglycerate. This Shigella boydii serotype 4 (strain Sb227) protein is 2,3-bisphosphoglycerate-dependent phosphoglycerate mutase.